Reading from the N-terminus, the 222-residue chain is 7-cyano-7-deazaguanine synthase (222 aa).

7-17 is a binding site for ATP; the sequence is LSGGLDSSTVL. Zn(2+)-binding residues include Cys-191, Cys-199, Cys-202, and Cys-205.

This sequence belongs to the QueC family. Zn(2+) serves as cofactor.

The enzyme catalyses 7-carboxy-7-deazaguanine + NH4(+) + ATP = 7-cyano-7-deazaguanine + ADP + phosphate + H2O + H(+). It functions in the pathway purine metabolism; 7-cyano-7-deazaguanine biosynthesis. In terms of biological role, catalyzes the ATP-dependent conversion of 7-carboxy-7-deazaguanine (CDG) to 7-cyano-7-deazaguanine (preQ(0)). This is 7-cyano-7-deazaguanine synthase from Trichodesmium erythraeum (strain IMS101).